A 203-amino-acid polypeptide reads, in one-letter code: Sperm-specific protein PHI-2B/PHI-3 (203 aa).

The span at 1–35 shows a compositional bias: basic residues; it reads MPSPSRKSRSRSRSRSKSPKRSPAKKARKTPKKPR. 2 disordered regions span residues 1–46 and 104–203; these read MPSP…PSTL and KTSA…KSKK. In terms of domain architecture, H15 spans 41–120; sequence KKPSTLSMIV…GATGSFRVGK (80 aa). 2 stretches are compositionally biased toward basic residues: residues 126–140 and 147–203; these read KKAK…KSSK and KAKK…KSKK.

In terms of processing, PL-II* and PL-IV are produced by post-translational cleavage of a common precursor. As to expression, sperm.

It is found in the nucleus. The protein resides in the chromosome. Functionally, linker histones are implicated in chromatin remodeling and/or transcriptional regulation during spermiogenesis, the process of spermatid maturation into spermatozoa. Protamines substitute for histones in the chromatin of sperm during the haploid phase of spermatogenesis. They compact sperm DNA into a highly condensed, stable and inactive complex. This Mytilus trossulus (Blue mussel) protein is Sperm-specific protein PHI-2B/PHI-3.